A 353-amino-acid polypeptide reads, in one-letter code: MEYSWLENKLQEINRKCIQINNKKSNNDSLNMIIGKLIDVMKDTSVLFKTLYERIIFNGSYYNNLKISKADEYDLDLILVLPVALETVLMLTPEAGYVDVKIDISKIKKLAYYRDILTPLEKLCENGIFSSLKIHSWFEGLVQKSLNIINASKYFPQYKLDMYKSGPAVTLTVHTPFSSYDMDLVPCLKLDKSLYPKGYKKQNCNHIYAVSKPNKDKEWRLSFIEQELSILRDNGHVKPAIRLLKFLRDQRDHKLIKSYFIVTVAMWDLETTNFNGKSLSFAFMTLLESLYKHICERKIPFYWNPNLNLLNKCHRDYLFNLENQLLNILKKLRSSNSNPNVLNEVFNFDIQES.

Residues serine 60 and 72-74 each bind ATP; that span reads EYD. Mg(2+)-binding residues include glutamate 72, aspartate 74, and aspartate 183. Aspartate 183 is a binding site for GTP. Lysine 245 contributes to the ATP binding site. Residues leucine 269 and glutamate 270 each contribute to the Mn(2+) site.

This sequence belongs to the mab-21 family. Mg(2+) is required as a cofactor. Mn(2+) serves as cofactor.

The catalysed reaction is GTP + ATP = 2',3'-cGAMP + 2 diphosphate. It carries out the reaction GTP + ATP = pppGp(2'-5')A + diphosphate. It catalyses the reaction pppGp(2'-5')A = 2',3'-cGAMP + diphosphate. In terms of biological role, nucleotidyltransferase that catalyzes the formation of cyclic GMP-AMP (2',3'-cGAMP) from ATP and GTP and plays a key role in innate immunity. Acts as a key sensor of double-stranded RNA (dsRNA), the presence of dsRNA in the cytoplasm being a danger signal that triggers the immune responses. Directly binds dsRNA, activating the nucleotidyltransferase activity, leading to synthesis of 2',3'-cGAMP, a second messenger that binds to and activates Sting, thereby triggering the immune response via activation of the NF-kappa-B transcription factor. This Nicrophorus vespilloides (Boreal carrion beetle) protein is Cyclic GMP-AMP synthase-like receptor.